Here is a 192-residue protein sequence, read N- to C-terminus: Putative manganese efflux pump MntP (192 aa).

A run of 6 helical transmembrane segments spans residues isoleucine 2 to valine 22, serine 41 to serine 61, alanine 62 to isoleucine 82, methionine 109 to phenylalanine 129, phenylalanine 136 to glycine 156, and glycine 172 to phenylalanine 192.

Belongs to the MntP (TC 9.B.29) family.

Its subcellular location is the cell membrane. Probably functions as a manganese efflux pump. This is Putative manganese efflux pump MntP from Bifidobacterium longum subsp. infantis (strain ATCC 15697 / DSM 20088 / JCM 1222 / NCTC 11817 / S12).